The primary structure comprises 371 residues: DNA replication and repair protein RecF (371 aa).

30–37 provides a ligand contact to ATP; that stretch reads GENAQGKT.

Belongs to the RecF family.

The protein resides in the cytoplasm. In terms of biological role, the RecF protein is involved in DNA metabolism; it is required for DNA replication and normal SOS inducibility. RecF binds preferentially to single-stranded, linear DNA. It also seems to bind ATP. The protein is DNA replication and repair protein RecF of Lysinibacillus sphaericus (strain C3-41).